We begin with the raw amino-acid sequence, 316 residues long: Epiphycan (316 aa).

Positions 1 to 23 are cleaved as a signal peptide; the sequence is MKTFVNIFLGFFIFESVGAVPIT. An O-linked (Xyl...) (dermatan sulfate) serine glycan is attached at serine 98. The 38-residue stretch at 100–137 folds into the LRRNT domain; the sequence is VLVPQTQDGLPTCLLCTCLGTTVYCDDRELDAVPPLPK. Cysteine 112 and cysteine 124 are joined by a disulfide. LRR repeat units follow at residues 138-159, 162-183, 186-207, 232-252, 253-274, and 284-304; these read NTMYFYSRYNRIRKINKNDFAN, NLKRIDLTANLISEIHEDAFRR, QLLELVLRDNRIRQLPELPSTL, ELQHLYITDNNLDHVPLPLPE, SLQALHLQNNNIQEMHEDTFCK, and ALEDIRLDGNPINLSKTPYAY. Cysteine 273 and cysteine 306 are joined by a disulfide. Asparagine 296 carries N-linked (GlcNAc...) asparagine glycosylation.

The protein belongs to the small leucine-rich proteoglycan (SLRP) family. SLRP class III subfamily. Post-translationally, the O-linked glycosaminoglycan chain(s) are dermatan sulfate. As to expression, preferentially expressed in flattened chondrocytes of developing chick limb cartilage. Also found in the cartilage peripheral zone bordering with bone marrow cavity.

It localises to the secreted. The protein resides in the extracellular space. Its subcellular location is the extracellular matrix. In terms of biological role, may have a role in bone formation and also in establishing the ordered structure of cartilage through matrix organization. This chain is Epiphycan (EPYC), found in Gallus gallus (Chicken).